A 335-amino-acid chain; its full sequence is Glyceraldehyde-3-phosphate dehydrogenase, cytosolic (335 aa).

Residues 13 to 14 (RI), Asp35, and Arg80 contribute to the NAD(+) site. D-glyceraldehyde 3-phosphate contacts are provided by residues 151–153 (SCT), Thr182, 211–212 (TG), and Arg234. Catalysis depends on Cys152, which acts as the Nucleophile. Asn316 is a binding site for NAD(+).

The protein belongs to the glyceraldehyde-3-phosphate dehydrogenase family. As to quaternary structure, homotetramer.

The protein localises to the cytoplasm. It carries out the reaction D-glyceraldehyde 3-phosphate + phosphate + NAD(+) = (2R)-3-phospho-glyceroyl phosphate + NADH + H(+). Its pathway is carbohydrate degradation; glycolysis; pyruvate from D-glyceraldehyde 3-phosphate: step 1/5. The sequence is that of Glyceraldehyde-3-phosphate dehydrogenase, cytosolic (GAPC) from Chondrus crispus (Carrageen Irish moss).